Here is a 377-residue protein sequence, read N- to C-terminus: tRNA-specific 2-thiouridylase MnmA (377 aa).

ATP is bound by residues 8–15 (GMSGGVDS) and M34. The segment at 94–96 (NPD) is interaction with target base in tRNA. Residue C99 is the Nucleophile of the active site. The cysteines at positions 99 and 201 are disulfide-linked. Residue G123 participates in ATP binding. Residues 151–153 (KDQ) are interaction with tRNA. Catalysis depends on C201, which acts as the Cysteine persulfide intermediate. The interval 315–316 (RY) is interaction with tRNA.

Belongs to the MnmA/TRMU family.

The protein localises to the cytoplasm. It carries out the reaction S-sulfanyl-L-cysteinyl-[protein] + uridine(34) in tRNA + AH2 + ATP = 2-thiouridine(34) in tRNA + L-cysteinyl-[protein] + A + AMP + diphosphate + H(+). Catalyzes the 2-thiolation of uridine at the wobble position (U34) of tRNA, leading to the formation of s(2)U34. This Acinetobacter baumannii (strain AB307-0294) protein is tRNA-specific 2-thiouridylase MnmA.